The following is a 222-amino-acid chain: MGQKVNPHGLRVGVIKEWNAKWYANSKNFSSYLVQDNKIRKFVKNKLSSAGVSRIEIERAAKRVKLNIHTAKPGMVIGKGGQGIEALKKDLVNFVDKENVLINIVEVKNSDANAQLMAENIAQQLERRISFRRAMKQTIQRAMRTGAKGVKTACAGRLAGAEIARTEQYHEGTIPLQTLRADIDYGFAEADTTYGKIGVKVWVYNGEILPTKKIEKKEEANA.

Positions 39–108 (IRKFVKNKLS…NVLINIVEVK (70 aa)) constitute a KH type-2 domain.

The protein belongs to the universal ribosomal protein uS3 family. As to quaternary structure, part of the 30S ribosomal subunit. Forms a tight complex with proteins S10 and S14.

Functionally, binds the lower part of the 30S subunit head. Binds mRNA in the 70S ribosome, positioning it for translation. In Clostridium acetobutylicum (strain ATCC 824 / DSM 792 / JCM 1419 / IAM 19013 / LMG 5710 / NBRC 13948 / NRRL B-527 / VKM B-1787 / 2291 / W), this protein is Small ribosomal subunit protein uS3.